We begin with the raw amino-acid sequence, 544 residues long: Chromosomal replication initiator protein DnaA (544 aa).

The tract at residues Met-1–Thr-71 is domain I, interacts with DnaA modulators. Positions Thr-71–Ser-207 are domain II. The segment covering Ala-90–Gly-105 has biased composition (low complexity). Disordered stretches follow at residues Ala-90–Ala-111 and Ala-180–Met-203. Polar residues predominate over residues Ser-191–Thr-200. The segment at Lys-208–Ser-424 is domain III, AAA+ region. The ATP site is built by Gly-252, Gly-254, Lys-255, and Thr-256. A domain IV, binds dsDNA region spans residues Lys-425 to Gly-544.

This sequence belongs to the DnaA family. As to quaternary structure, oligomerizes as a right-handed, spiral filament on DNA at oriC.

The protein localises to the cytoplasm. In terms of biological role, plays an essential role in the initiation and regulation of chromosomal replication. ATP-DnaA binds to the origin of replication (oriC) to initiate formation of the DNA replication initiation complex once per cell cycle. Binds the DnaA box (a 9 base pair repeat at the origin) and separates the double-stranded (ds)DNA. Forms a right-handed helical filament on oriC DNA; dsDNA binds to the exterior of the filament while single-stranded (ss)DNA is stabiized in the filament's interior. The ATP-DnaA-oriC complex binds and stabilizes one strand of the AT-rich DNA unwinding element (DUE), permitting loading of DNA polymerase. After initiation quickly degrades to an ADP-DnaA complex that is not apt for DNA replication. Binds acidic phospholipids. The polypeptide is Chromosomal replication initiator protein DnaA (Paraburkholderia xenovorans (strain LB400)).